The primary structure comprises 1342 residues: DNA-directed RNA polymerase subunit beta (1342 aa).

The protein belongs to the RNA polymerase beta chain family. As to quaternary structure, the RNAP catalytic core consists of 2 alpha, 1 beta, 1 beta' and 1 omega subunit. When a sigma factor is associated with the core the holoenzyme is formed, which can initiate transcription.

It carries out the reaction RNA(n) + a ribonucleoside 5'-triphosphate = RNA(n+1) + diphosphate. DNA-dependent RNA polymerase catalyzes the transcription of DNA into RNA using the four ribonucleoside triphosphates as substrates. The sequence is that of DNA-directed RNA polymerase subunit beta from Aliivibrio fischeri (strain MJ11) (Vibrio fischeri).